We begin with the raw amino-acid sequence, 527 residues long: Inorganic phosphate transporter 1-1 (527 aa).

At 1–21 the chain is on the cytoplasmic side; that stretch reads MAGGQLNVLSTLDQAKTQWYH. The helical transmembrane segment at 22-42 threads the bilayer; the sequence is FMAIVIAGMGFFTDAYDLFCI. Topologically, residues 43 to 70 are extracellular; it reads SLVTKLLGRIYYTDDSKDTPGALPPNVS. A helical transmembrane segment spans residues 71–91; that stretch reads AAVTGVALCGTLAGQLFFGWL. The Cytoplasmic segment spans residues 92–99; that stretch reads GDKLGRKS. Residues 100 to 120 traverse the membrane as a helical segment; the sequence is VYGFTLILMVVCSVASGLSFG. Over 121 to 124 the chain is Extracellular; that stretch reads SSAK. A helical transmembrane segment spans residues 125 to 145; sequence GVVSTLCFFRFWLGFGIGGDY. Over 146–163 the chain is Cytoplasmic; that stretch reads PLSATIMSEYANKRTRGA. Residues 164–184 traverse the membrane as a helical segment; it reads FIAAVFAMQGFGILFGAIVAL. Residues 185-211 lie on the Extracellular side of the membrane; the sequence is AVSAGFRHAYPAPSYSDNHAASLVPQA. The chain crosses the membrane as a helical span at residues 212–232; the sequence is DYVWRIILMFGTVPAALTYYW. Topologically, residues 233-292 are cytoplasmic; sequence RMKMPETARYTALIARNAKQAAADMSKVLHTQIEESADRAETVAVGGESWGLFSRQFLRR. Residues 293–313 traverse the membrane as a helical segment; sequence HGLHLLATTSTWFLLDIAFYS. Residues 314 to 348 lie on the Extracellular side of the membrane; it reads QNLFQKDIFSKVGWIPPAKTMNALEELYRIARAQA. The helical transmembrane segment at 349-369 threads the bilayer; the sequence is LIALCGTIPGYWFTVAFIEIM. Residues 370–371 lie on the Cytoplasmic side of the membrane; the sequence is GR. Residues 372–392 form a helical membrane-spanning segment; that stretch reads FWIQIMGFAMMTAFMLGLAIP. Topologically, residues 393–405 are extracellular; that stretch reads YHHWTTPGHHTGF. A helical membrane pass occupies residues 406–426; it reads IVMYGFTFFFANFGPNSTTFI. Residues 427–442 lie on the Cytoplasmic side of the membrane; it reads VPAEIYPARLRSTCHG. Residues 443–463 traverse the membrane as a helical segment; sequence ISAAAGKAGAIIGAFGFLYAA. At 464 to 481 the chain is on the extracellular side; the sequence is QDQHKPEPGYPRGIGIKN. Residues 482–502 traverse the membrane as a helical segment; the sequence is ALFVLAGTNFLGTIMTLLVPE. Topologically, residues 503–527 are cytoplasmic; sequence SKGMSLEVISQEVADGDDEEAAYPK.

The protein belongs to the major facilitator superfamily. Phosphate:H(+) symporter (TC 2.A.1.9) family. In terms of tissue distribution, expressed in roots, stems and leaves.

It localises to the membrane. High-affinity transporter for external inorganic phosphate. Required for phosphate acquisition in plant. The protein is Inorganic phosphate transporter 1-1 (PHT1-1) of Oryza sativa subsp. japonica (Rice).